Here is a 148-residue protein sequence, read N- to C-terminus: Auxin-responsive protein SAUR65 (148 aa).

The protein belongs to the ARG7 family.

The protein resides in the cell membrane. Its function is as follows. May promote auxin-stimulated organ elongation, such as hypocotyls, stamen filaments and petals. This Arabidopsis thaliana (Mouse-ear cress) protein is Auxin-responsive protein SAUR65.